Consider the following 236-residue polypeptide: Purine nucleoside phosphorylase DeoD-type 1 (236 aa).

His5 is an a purine D-ribonucleoside binding site. Phosphate is bound by residues Gly21, Arg25, Arg44, and 88–91 (RVGS). A purine D-ribonucleoside contacts are provided by residues 180-182 (EME) and 204-205 (TD). Residue Asp205 is the Proton donor of the active site.

This sequence belongs to the PNP/UDP phosphorylase family. In terms of assembly, homohexamer; trimer of homodimers.

The enzyme catalyses a purine D-ribonucleoside + phosphate = a purine nucleobase + alpha-D-ribose 1-phosphate. The catalysed reaction is a purine 2'-deoxy-D-ribonucleoside + phosphate = a purine nucleobase + 2-deoxy-alpha-D-ribose 1-phosphate. Its function is as follows. Catalyzes the reversible phosphorolytic breakdown of the N-glycosidic bond in the beta-(deoxy)ribonucleoside molecules, with the formation of the corresponding free purine bases and pentose-1-phosphate. The sequence is that of Purine nucleoside phosphorylase DeoD-type 1 from Shewanella oneidensis (strain ATCC 700550 / JCM 31522 / CIP 106686 / LMG 19005 / NCIMB 14063 / MR-1).